The sequence spans 131 residues: NADH dehydrogenase [ubiquinone] 1 alpha subcomplex subunit 6 (131 aa).

The protein belongs to the complex I LYR family. As to quaternary structure, mammalian complex I is composed of 45 different subunits.

It localises to the mitochondrion inner membrane. Accessory subunit of the mitochondrial membrane respiratory chain NADH dehydrogenase (Complex I), that is believed to be not involved in catalysis. Required for proper complex I assembly. Complex I functions in the transfer of electrons from NADH to the respiratory chain. The immediate electron acceptor for the enzyme is believed to be ubiquinone. The chain is NADH dehydrogenase [ubiquinone] 1 alpha subcomplex subunit 6 from Mus musculus (Mouse).